The following is a 444-amino-acid chain: Ubiquitin carboxyl-terminal hydrolase MINDY-3 (444 aa).

C51 functions as the Nucleophile in the catalytic mechanism. S124 bears the Phosphoserine mark. The Proton acceptor role is filled by H286.

Belongs to the MINDY deubiquitinase family. FAM188 subfamily. Interacts with COPS5.

The protein localises to the nucleus. The enzyme catalyses Thiol-dependent hydrolysis of ester, thioester, amide, peptide and isopeptide bonds formed by the C-terminal Gly of ubiquitin (a 76-residue protein attached to proteins as an intracellular targeting signal).. Functionally, hydrolase that can remove 'Lys-48'-linked conjugated ubiquitin from proteins. The chain is Ubiquitin carboxyl-terminal hydrolase MINDY-3 from Mus musculus (Mouse).